A 316-amino-acid chain; its full sequence is Ribosomal RNA small subunit methyltransferase H (316 aa).

S-adenosyl-L-methionine-binding positions include 35-37 (GGH), Asp55, Phe79, Asp101, and Gln108.

Belongs to the methyltransferase superfamily. RsmH family.

The protein resides in the cytoplasm. It carries out the reaction cytidine(1402) in 16S rRNA + S-adenosyl-L-methionine = N(4)-methylcytidine(1402) in 16S rRNA + S-adenosyl-L-homocysteine + H(+). Functionally, specifically methylates the N4 position of cytidine in position 1402 (C1402) of 16S rRNA. In Vibrio proteolyticus (Aeromonas proteolytica), this protein is Ribosomal RNA small subunit methyltransferase H.